The primary structure comprises 425 residues: Multifunctional CCA protein (425 aa).

ATP contacts are provided by Gly8 and Arg11. Residues Gly8 and Arg11 each coordinate CTP. Positions 21 and 23 each coordinate Mg(2+). ATP contacts are provided by Arg91, Arg137, and Arg140. Residues Arg91, Arg137, and Arg140 each coordinate CTP. The HD domain occupies 228–329 (TGVHTLMVLD…VDLLDRLGAL (102 aa)).

The protein belongs to the tRNA nucleotidyltransferase/poly(A) polymerase family. Bacterial CCA-adding enzyme type 1 subfamily. Monomer. Can also form homodimers and oligomers. Requires Mg(2+) as cofactor. It depends on Ni(2+) as a cofactor.

It carries out the reaction a tRNA precursor + 2 CTP + ATP = a tRNA with a 3' CCA end + 3 diphosphate. It catalyses the reaction a tRNA with a 3' CCA end + 2 CTP + ATP = a tRNA with a 3' CCACCA end + 3 diphosphate. Its function is as follows. Catalyzes the addition and repair of the essential 3'-terminal CCA sequence in tRNAs without using a nucleic acid template. Adds these three nucleotides in the order of C, C, and A to the tRNA nucleotide-73, using CTP and ATP as substrates and producing inorganic pyrophosphate. tRNA 3'-terminal CCA addition is required both for tRNA processing and repair. Also involved in tRNA surveillance by mediating tandem CCA addition to generate a CCACCA at the 3' terminus of unstable tRNAs. While stable tRNAs receive only 3'-terminal CCA, unstable tRNAs are marked with CCACCA and rapidly degraded. The sequence is that of Multifunctional CCA protein from Methylococcus capsulatus (strain ATCC 33009 / NCIMB 11132 / Bath).